The sequence spans 331 residues: UPF0194 membrane protein YbhG (331 aa).

An N-terminal signal peptide occupies residues 1-15 (MKKPVVIGLAVVVLA). Residues 107-208 (EEIAQAAAAV…LNLQDSTLIA (102 aa)) are a coiled coil.

It belongs to the UPF0194 family.

It is found in the periplasm. The polypeptide is UPF0194 membrane protein YbhG (Escherichia coli O139:H28 (strain E24377A / ETEC)).